Here is a 193-residue protein sequence, read N- to C-terminus: Putative manganese efflux pump MntP (193 aa).

A run of 6 helical transmembrane segments spans residues 6–26 (VIFI…GIAC), 48–68 (AGMV…ISAF), 71–91 (WIAF…ALQG), 108–128 (LLGV…AFAV), 132–152 (NIGL…FLGF), and 165–185 (WVGV…LAEH).

The protein belongs to the MntP (TC 9.B.29) family.

It is found in the cell membrane. Functionally, probably functions as a manganese efflux pump. This is Putative manganese efflux pump MntP from Dehalococcoides mccartyi (strain ATCC BAA-2100 / JCM 16839 / KCTC 5957 / BAV1).